A 603-amino-acid chain; its full sequence is NADH-quinone oxidoreductase subunit C/D (603 aa).

The segment at 1–193 (MVNNMTDLTA…DPFTLTKQKE (193 aa)) is NADH dehydrogenase I subunit C. Residues 217-603 (DFMFLNLGPN…IDFVMSDVDR (387 aa)) are NADH dehydrogenase I subunit D.

This sequence in the N-terminal section; belongs to the complex I 30 kDa subunit family. In the C-terminal section; belongs to the complex I 49 kDa subunit family. As to quaternary structure, NDH-1 is composed of 13 different subunits. Subunits NuoB, CD, E, F, and G constitute the peripheral sector of the complex.

It is found in the cell inner membrane. It catalyses the reaction a quinone + NADH + 5 H(+)(in) = a quinol + NAD(+) + 4 H(+)(out). In terms of biological role, NDH-1 shuttles electrons from NADH, via FMN and iron-sulfur (Fe-S) centers, to quinones in the respiratory chain. The immediate electron acceptor for the enzyme in this species is believed to be ubiquinone. Couples the redox reaction to proton translocation (for every two electrons transferred, four hydrogen ions are translocated across the cytoplasmic membrane), and thus conserves the redox energy in a proton gradient. This is NADH-quinone oxidoreductase subunit C/D from Cronobacter sakazakii (strain ATCC BAA-894) (Enterobacter sakazakii).